The sequence spans 148 residues: Large-conductance mechanosensitive channel (148 aa).

The next 2 helical transmembrane spans lie at 9–29 (AFAV…GAAF) and 79–99 (IQTV…VKAI).

It belongs to the MscL family. As to quaternary structure, homopentamer.

The protein resides in the cell inner membrane. In terms of biological role, channel that opens in response to stretch forces in the membrane lipid bilayer. May participate in the regulation of osmotic pressure changes within the cell. The chain is Large-conductance mechanosensitive channel from Pseudomonas savastanoi pv. phaseolicola (strain 1448A / Race 6) (Pseudomonas syringae pv. phaseolicola (strain 1448A / Race 6)).